A 259-amino-acid polypeptide reads, in one-letter code: Bis(5'-nucleosyl)-tetraphosphatase, symmetrical (259 aa).

Belongs to the Ap4A hydrolase family.

It catalyses the reaction P(1),P(4)-bis(5'-adenosyl) tetraphosphate + H2O = 2 ADP + 2 H(+). Hydrolyzes diadenosine 5',5'''-P1,P4-tetraphosphate to yield ADP. This chain is Bis(5'-nucleosyl)-tetraphosphatase, symmetrical (apaH), found in Klebsiella aerogenes (Enterobacter aerogenes).